The following is a 550-amino-acid chain: Dihydroxy-acid dehydratase (550 aa).

D81 contacts Mg(2+). C122 contributes to the [2Fe-2S] cluster binding site. Residues D123 and K124 each coordinate Mg(2+). The residue at position 124 (K124) is an N6-carboxylysine. C194 is a binding site for [2Fe-2S] cluster. Position 442 (E442) interacts with Mg(2+). Residue S467 is the Proton acceptor of the active site.

The protein belongs to the IlvD/Edd family. In terms of assembly, homodimer. [2Fe-2S] cluster is required as a cofactor. The cofactor is Mg(2+).

The enzyme catalyses (2R)-2,3-dihydroxy-3-methylbutanoate = 3-methyl-2-oxobutanoate + H2O. It carries out the reaction (2R,3R)-2,3-dihydroxy-3-methylpentanoate = (S)-3-methyl-2-oxopentanoate + H2O. It participates in amino-acid biosynthesis; L-isoleucine biosynthesis; L-isoleucine from 2-oxobutanoate: step 3/4. Its pathway is amino-acid biosynthesis; L-valine biosynthesis; L-valine from pyruvate: step 3/4. Its function is as follows. Functions in the biosynthesis of branched-chain amino acids. Catalyzes the dehydration of (2R,3R)-2,3-dihydroxy-3-methylpentanoate (2,3-dihydroxy-3-methylvalerate) into 2-oxo-3-methylpentanoate (2-oxo-3-methylvalerate) and of (2R)-2,3-dihydroxy-3-methylbutanoate (2,3-dihydroxyisovalerate) into 2-oxo-3-methylbutanoate (2-oxoisovalerate), the penultimate precursor to L-isoleucine and L-valine, respectively. In Methanoregula boonei (strain DSM 21154 / JCM 14090 / 6A8), this protein is Dihydroxy-acid dehydratase.